A 141-amino-acid chain; its full sequence is ATP synthase F(0) complex subunit C2, mitochondrial (141 aa).

The N-terminal 66 residues, 1–66, are a transit peptide targeting the mitochondrion; that stretch reads MFSCFKFIST…RNFQTSAISR (66 aa). A helical membrane pass occupies residues 82–102; sequence VGVAGSGAGIGTVFGSLIIGY. At lysine 109 the chain carries N6,N6,N6-trimethyllysine. A helical transmembrane segment spans residues 117–137; it reads ILGFALSEAMGLFCLMVAFLI.

It belongs to the ATPase C chain family. F-type ATPases have 2 components, CF(1) - the catalytic core - and CF(0) - the membrane proton channel. CF(1) has five subunits: alpha(3), beta(3), gamma(1), delta(1), epsilon(1). CF(0) has three main subunits: a, b and c. Interacts with DNAJC30; interaction is direct. Post-translationally, trimethylated by ATPSCKMT at Lys-109. Methylation is required for proper incorporation of the C subunit into the ATP synthase complex and mitochondrial respiration.

Its subcellular location is the mitochondrion membrane. In terms of biological role, mitochondrial membrane ATP synthase (F(1)F(0) ATP synthase or Complex V) produces ATP from ADP in the presence of a proton gradient across the membrane which is generated by electron transport complexes of the respiratory chain. F-type ATPases consist of two structural domains, F(1) - containing the extramembraneous catalytic core and F(0) - containing the membrane proton channel, linked together by a central stalk and a peripheral stalk. During catalysis, ATP synthesis in the catalytic domain of F(1) is coupled via a rotary mechanism of the central stalk subunits to proton translocation. Part of the complex F(0) domain. A homomeric c-ring of probably 10 subunits is part of the complex rotary element. This chain is ATP synthase F(0) complex subunit C2, mitochondrial, found in Pongo abelii (Sumatran orangutan).